The primary structure comprises 550 residues: Membrane protein insertase YidC (550 aa).

Residues 3–23 (IKRTVLWVIFFMSAVMLFDNW) form a helical membrane-spanning segment. Positions 34–73 (FPSATQTKTAAPAAPGSSTTASQPTDLPQTTAAAPGSTTP) are disordered. Low complexity predominate over residues 35 to 73 (PSATQTKTAAPAAPGSSTTASQPTDLPQTTAAAPGSTTP). 4 helical membrane-spanning segments follow: residues 363–383 (WGWA…PLSA), 429–449 (FGGC…YWVL), 472–492 (PYFI…KLNP), and 503–523 (MMFM…GLVL).

It belongs to the OXA1/ALB3/YidC family. Type 1 subfamily. As to quaternary structure, interacts with the Sec translocase complex via SecD. Specifically interacts with transmembrane segments of nascent integral membrane proteins during membrane integration.

The protein localises to the cell inner membrane. Required for the insertion and/or proper folding and/or complex formation of integral membrane proteins into the membrane. Involved in integration of membrane proteins that insert both dependently and independently of the Sec translocase complex, as well as at least some lipoproteins. Aids folding of multispanning membrane proteins. The polypeptide is Membrane protein insertase YidC (Paraburkholderia phymatum (strain DSM 17167 / CIP 108236 / LMG 21445 / STM815) (Burkholderia phymatum)).